Reading from the N-terminus, the 287-residue chain is ATP synthase gamma chain (287 aa).

This sequence belongs to the ATPase gamma chain family. F-type ATPases have 2 components, CF(1) - the catalytic core - and CF(0) - the membrane proton channel. CF(1) has five subunits: alpha(3), beta(3), gamma(1), delta(1), epsilon(1). CF(0) has three main subunits: a, b and c.

It is found in the cell inner membrane. Its function is as follows. Produces ATP from ADP in the presence of a proton gradient across the membrane. The gamma chain is believed to be important in regulating ATPase activity and the flow of protons through the CF(0) complex. The polypeptide is ATP synthase gamma chain (Geobacter metallireducens (strain ATCC 53774 / DSM 7210 / GS-15)).